A 552-amino-acid polypeptide reads, in one-letter code: MAKFQAPVINDNPLGWGPCAVPDQFKDMPYQPFSKGDRLGKVADWTGATYQDKRYTNKYSSQFGGGSQYAYFHDEDETSFQLVDTTKMQKTAYQRNRLRFAQRNLRRDKDRRNMLQFNMQTLPKSAKQKERDRLRLQKKFQKQFGVRQKWDQKSQAQLKPRDSSVEVRSDWEVKEEMDFPRLMKMRYMEVSDPLDIECCGALEFYDKAFDRITTRNERPLKSIKRIFHTVTTTDDPVIRKLAKTQGNVFATDAILATLMCCTRSVNSWDIVVQRVGSKIFFDKRDNSDFDLLTVSETANEPPQDDVNSLNSPRNLAMEATYINHNFSQQCLRMGKEKHTFPNPNPFIEDDVDKNEVASVAYRYRRWKLGDDIDLVVRCEHDGFMTGANGEVSFVNIKTLNEWDSRYCNGVDWRQKLDSQRGAVIATELKNNSYKLARWTCCALLAGSEYLKLGYVSRCHVKDSTRHVVLGTQQFKPNEFANQINLSMENAWGILRCVVDICMKLDEGKYLILKDPNKQVIRIYSLPDGTFSSDEEDDDDDEEEEEEVEEEES.

The segment at 288 to 302 (DFDLLTVSETANEPP) is RNA gate. Residues 526-552 (PDGTFSSDEEDDDDDEEEEEEVEEEES) form a disordered region. The span at 532-552 (SDEEDDDDDEEEEEEVEEEES) shows a compositional bias: acidic residues.

The protein belongs to the eIF-3 subunit D family. Component of the eukaryotic translation initiation factor 3 (eIF-3) complex, which is composed of 13 subunits: eif3a, eif3b, eif3c, eif3d, eif3e, eif3f, eif3g, eif3h, eif3i, eif3j, eif3k, eif3l and eif3m.

The protein resides in the cytoplasm. MRNA cap-binding component of the eukaryotic translation initiation factor 3 (eIF-3) complex, which is involved in protein synthesis of a specialized repertoire of mRNAs and, together with other initiation factors, stimulates binding of mRNA and methionyl-tRNAi to the 40S ribosome. The eIF-3 complex specifically targets and initiates translation of a subset of mRNAs involved in cell proliferation. In the eIF-3 complex, eif3d specifically recognizes and binds the 7-methylguanosine cap of a subset of mRNAs. This Xenopus tropicalis (Western clawed frog) protein is Eukaryotic translation initiation factor 3 subunit D (eif3d).